The sequence spans 258 residues: Trypsin (258 aa).

A signal peptide spans 1 to 16 (MIRFTLALAVIGVTFA). Residues 17–29 (ASTPQIETNPNLE) constitute a propeptide, activation peptide. The 228-residue stretch at 30–257 (IIGGHDANII…FRDWINEETE (228 aa)) folds into the Peptidase S1 domain. A disulfide bridge links Cys-55 with Cys-71. His-70 serves as the catalytic Charge relay system. Asn-110 carries N-linked (GlcNAc...) asparagine glycosylation. The active-site Charge relay system is the Asp-117. N-linked (GlcNAc...) asparagine glycans are attached at residues Asn-130 and Asn-188. Cystine bridges form between Cys-182-Cys-197 and Cys-209-Cys-233. Ser-213 acts as the Charge relay system in catalysis.

Belongs to the peptidase S1 family. In terms of tissue distribution, expressed in larval carcasses and gut, and adult gut.

Its subcellular location is the secreted. The enzyme catalyses Preferential cleavage: Arg-|-Xaa, Lys-|-Xaa.. This is Trypsin from Phaedon cochleariae (Mustard beetle).